A 343-amino-acid chain; its full sequence is MSAFTPASEVLLRHSDDFEQSRILFAGDLQDDLPARLDTAASRAHTQQFHHWQVLSRQMGDNARFSLVATVDDVADCDTLIYYWPKNKPEAQFQLMNLLSLLPVGTDIFVVGENRSGVRSAEQMLADYAPLNKVDSARRCGLYFGRLEKQPVFDADKFWGEYSVDGLTVKTLPGVFSRDGLDVGSQLLLSTLTPHTKGKVLDVGCGAGVLSVAFARHSPKIRLTLCDVSAPAVEASRATLAANGVEGEVFASNVFSEVKGRFDMIISNPPFHDGMQTSLDAAQTLIRGAVRHLNSGGELRIVANAFLPYPDVLDETFGFHEVIAQTGRFKVYRAIMTRQAKKG.

Belongs to the methyltransferase superfamily. RsmC family. Monomer.

The protein resides in the cytoplasm. The enzyme catalyses guanosine(1207) in 16S rRNA + S-adenosyl-L-methionine = N(2)-methylguanosine(1207) in 16S rRNA + S-adenosyl-L-homocysteine + H(+). Its function is as follows. Specifically methylates the guanine in position 1207 of 16S rRNA in the 30S particle. The sequence is that of Ribosomal RNA small subunit methyltransferase C from Escherichia coli (strain 55989 / EAEC).